Reading from the N-terminus, the 416-residue chain is Glutamyl-tRNA reductase (416 aa).

Residues 49–52, Ser-105, 110–112, and Gln-116 contribute to the substrate site; these read TCNR and EPQ. The active-site Nucleophile is Cys-50. 185 to 190 serves as a coordination point for NADP(+); that stretch reads GAGETI.

This sequence belongs to the glutamyl-tRNA reductase family. In terms of assembly, homodimer.

The catalysed reaction is (S)-4-amino-5-oxopentanoate + tRNA(Glu) + NADP(+) = L-glutamyl-tRNA(Glu) + NADPH + H(+). The protein operates within porphyrin-containing compound metabolism; protoporphyrin-IX biosynthesis; 5-aminolevulinate from L-glutamyl-tRNA(Glu): step 1/2. Functionally, catalyzes the NADPH-dependent reduction of glutamyl-tRNA(Glu) to glutamate 1-semialdehyde (GSA). The chain is Glutamyl-tRNA reductase from Shewanella sediminis (strain HAW-EB3).